The primary structure comprises 173 residues: Peptidyl-prolyl cis-trans isomerase cyp3 (173 aa).

The PPIase cyclophilin-type domain occupies 8 to 172; the sequence is FMDIAIDGRL…SNVAIVECGE (165 aa).

It belongs to the cyclophilin-type PPIase family. PPIase H subfamily.

It is found in the cytoplasm. The protein resides in the cytoskeleton. Its subcellular location is the microtubule organizing center. It localises to the spindle pole body. It carries out the reaction [protein]-peptidylproline (omega=180) = [protein]-peptidylproline (omega=0). In terms of biological role, PPIases accelerate the folding of proteins. It catalyzes the cis-trans isomerization of proline imidic peptide bonds in oligopeptides. This is Peptidyl-prolyl cis-trans isomerase cyp3 (cyp3) from Schizosaccharomyces pombe (strain 972 / ATCC 24843) (Fission yeast).